The following is a 364-amino-acid chain: Programmed cell death protein 2-like (364 aa).

A2 carries the N-acetylalanine modification. The segment at 125–150 (EGSQDWGSDTEETPPPPASDLGSDSN) is disordered.

Its function is as follows. Over-expression suppresses AP1, CREB, NFAT, and NF-kB transcriptional activation, and delays cell cycle progression at S phase. In Mus musculus (Mouse), this protein is Programmed cell death protein 2-like (Pdcd2l).